Consider the following 410-residue polypeptide: Translation initiation factor 2 subunit gamma (410 aa).

Residues 6-203 (QSEINIGMVG…AIEDLMPTPE (198 aa)) enclose the tr-type G domain. Positions 15-22 (GHVDHGKT) are G1. 4 residues coordinate Mg(2+): Asp18, Thr22, Gly43, and Ser45. 18–23 (DHGKTS) contacts GTP. The segment at 43–47 (GISIR) is G2. Positions 58, 61, 73, and 76 each coordinate Zn(2+). Residues 90–93 (DAPG) form a G3 region. Residues 146–149 (NKID) and 181–183 (SAH) each bind GTP. The interval 146–149 (NKID) is G4. The G5 stretch occupies residues 181–183 (SAH).

This sequence belongs to the TRAFAC class translation factor GTPase superfamily. Classic translation factor GTPase family. EIF2G subfamily. Heterotrimer composed of an alpha, a beta and a gamma chain. Mg(2+) serves as cofactor.

It catalyses the reaction GTP + H2O = GDP + phosphate + H(+). EIF-2 functions in the early steps of protein synthesis by forming a ternary complex with GTP and initiator tRNA. The sequence is that of Translation initiation factor 2 subunit gamma from Methanococcus aeolicus (strain ATCC BAA-1280 / DSM 17508 / OCM 812 / Nankai-3).